The primary structure comprises 600 residues: CTP synthase (600 aa).

The Glutamine amidotransferase type-1 domain occupies 304–570 (TIVLVGKYTH…IQSGEEVEWS (267 aa)). Active-site for GATase activity residues include Cys-403, His-532, and Glu-534.

This sequence belongs to the CTP synthase family.

The enzyme catalyses UTP + L-glutamine + ATP + H2O = CTP + L-glutamate + ADP + phosphate + 2 H(+). The protein operates within pyrimidine metabolism; CTP biosynthesis via de novo pathway; CTP from UDP: step 2/2. In terms of biological role, catalyzes the ATP-dependent amination of UTP to CTP with either L-glutamine or ammonia as the source of nitrogen. In Schizosaccharomyces pombe (strain 972 / ATCC 24843) (Fission yeast), this protein is CTP synthase (ura7).